The chain runs to 477 residues: Glutamyl-tRNA(Gln) amidotransferase subunit A (477 aa).

Active-site charge relay system residues include lysine 76 and serine 151. Serine 175 acts as the Acyl-ester intermediate in catalysis.

Belongs to the amidase family. GatA subfamily. As to quaternary structure, heterotrimer of A, B and C subunits.

It catalyses the reaction L-glutamyl-tRNA(Gln) + L-glutamine + ATP + H2O = L-glutaminyl-tRNA(Gln) + L-glutamate + ADP + phosphate + H(+). Its function is as follows. Allows the formation of correctly charged Gln-tRNA(Gln) through the transamidation of misacylated Glu-tRNA(Gln) in organisms which lack glutaminyl-tRNA synthetase. The reaction takes place in the presence of glutamine and ATP through an activated gamma-phospho-Glu-tRNA(Gln). The polypeptide is Glutamyl-tRNA(Gln) amidotransferase subunit A (Chlorobium phaeobacteroides (strain BS1)).